The chain runs to 149 residues: D-aminoacyl-tRNA deacylase (149 aa).

Residues 137 to 138 (GP) carry the Gly-cisPro motif, important for rejection of L-amino acids motif.

Belongs to the DTD family. In terms of assembly, homodimer.

The protein localises to the cytoplasm. The enzyme catalyses glycyl-tRNA(Ala) + H2O = tRNA(Ala) + glycine + H(+). It catalyses the reaction a D-aminoacyl-tRNA + H2O = a tRNA + a D-alpha-amino acid + H(+). In terms of biological role, an aminoacyl-tRNA editing enzyme that deacylates mischarged D-aminoacyl-tRNAs. Also deacylates mischarged glycyl-tRNA(Ala), protecting cells against glycine mischarging by AlaRS. Acts via tRNA-based rather than protein-based catalysis; rejects L-amino acids rather than detecting D-amino acids in the active site. By recycling D-aminoacyl-tRNA to D-amino acids and free tRNA molecules, this enzyme counteracts the toxicity associated with the formation of D-aminoacyl-tRNA entities in vivo and helps enforce protein L-homochirality. This chain is D-aminoacyl-tRNA deacylase, found in Clostridium botulinum (strain 657 / Type Ba4).